A 254-amino-acid chain; its full sequence is Glutathione S-transferase U12 (254 aa).

Positions 19 to 23 (KKRKK) match the Nuclear localization signal motif. Residues 33–114 (TTVKLIGTWA…YVDESWPSDL (82 aa)) form the GST N-terminal domain. Residues 43 to 44 (SP), 71 to 72 (GK), 85 to 86 (KV), and 98 to 99 (ES) contribute to the glutathione site. The region spanning 120–252 (LPSERAFARF…EFIEFAKKKF (133 aa)) is the GST C-terminal domain.

This sequence belongs to the GST superfamily. Tau family.

The protein localises to the nucleus. It carries out the reaction RX + glutathione = an S-substituted glutathione + a halide anion + H(+). Its function is as follows. May be involved in the conjugation of reduced glutathione to a wide number of exogenous and endogenous hydrophobic electrophiles and have a detoxification role against certain herbicides. This Arabidopsis thaliana (Mouse-ear cress) protein is Glutathione S-transferase U12 (GSTU12).